The primary structure comprises 493 residues: 3-octaprenyl-4-hydroxybenzoate carboxy-lyase (493 aa).

Residue asparagine 172 coordinates Mn(2+). Residues 175 to 177 (IYR), 189 to 191 (RWL), and 194 to 195 (RG) contribute to the prenylated FMN site. Residue glutamate 238 participates in Mn(2+) binding. Aspartate 287 acts as the Proton donor in catalysis.

It belongs to the UbiD family. As to quaternary structure, homohexamer. Prenylated FMN serves as cofactor. Requires Mn(2+) as cofactor.

The protein localises to the cell membrane. It catalyses the reaction a 4-hydroxy-3-(all-trans-polyprenyl)benzoate + H(+) = a 2-(all-trans-polyprenyl)phenol + CO2. Its pathway is cofactor biosynthesis; ubiquinone biosynthesis. Catalyzes the decarboxylation of 3-octaprenyl-4-hydroxy benzoate to 2-octaprenylphenol, an intermediate step in ubiquinone biosynthesis. This chain is 3-octaprenyl-4-hydroxybenzoate carboxy-lyase, found in Shewanella pealeana (strain ATCC 700345 / ANG-SQ1).